A 168-amino-acid polypeptide reads, in one-letter code: Lipoprotein signal peptidase (168 aa).

3 helical membrane passes run 8-28 (TLLV…VVLL), 70-90 (KYFL…YLFF), and 104-124 (VLLC…GHIV). Active-site residues include aspartate 125 and aspartate 143. A helical transmembrane segment spans residues 134-154 (WAFPTFNVADVLISLGTLLLV).

It belongs to the peptidase A8 family.

It localises to the cell inner membrane. It carries out the reaction Release of signal peptides from bacterial membrane prolipoproteins. Hydrolyzes -Xaa-Yaa-Zaa-|-(S,diacylglyceryl)Cys-, in which Xaa is hydrophobic (preferably Leu), and Yaa (Ala or Ser) and Zaa (Gly or Ala) have small, neutral side chains.. Its pathway is protein modification; lipoprotein biosynthesis (signal peptide cleavage). Its function is as follows. This protein specifically catalyzes the removal of signal peptides from prolipoproteins. This Chlamydia pneumoniae (Chlamydophila pneumoniae) protein is Lipoprotein signal peptidase.